A 233-amino-acid polypeptide reads, in one-letter code: Cilia- and flagella-associated protein 299 (233 aa).

The protein localises to the cytoplasm. It is found in the nucleus. In terms of biological role, may be involved in spermatogenesis. The sequence is that of Cilia- and flagella-associated protein 299 from Xenopus laevis (African clawed frog).